A 402-amino-acid chain; its full sequence is Tol-Pal system protein TolB (402 aa).

An N-terminal signal peptide occupies residues 1–17 (MKKIVAIFLVFLGSLWA).

The protein belongs to the TolB family. The Tol-Pal system is composed of five core proteins: the inner membrane proteins TolA, TolQ and TolR, the periplasmic protein TolB and the outer membrane protein Pal. They form a network linking the inner and outer membranes and the peptidoglycan layer.

Its subcellular location is the periplasm. Part of the Tol-Pal system, which plays a role in outer membrane invagination during cell division and is important for maintaining outer membrane integrity. This chain is Tol-Pal system protein TolB, found in Campylobacter jejuni subsp. jejuni serotype O:2 (strain ATCC 700819 / NCTC 11168).